Here is a 169-residue protein sequence, read N- to C-terminus: Protein-export protein SecB (169 aa).

This sequence belongs to the SecB family. Homotetramer, a dimer of dimers. One homotetramer interacts with 1 SecA dimer.

Its subcellular location is the cytoplasm. Its function is as follows. One of the proteins required for the normal export of preproteins out of the cell cytoplasm. It is a molecular chaperone that binds to a subset of precursor proteins, maintaining them in a translocation-competent state. It also specifically binds to its receptor SecA. The chain is Protein-export protein SecB from Alteromonas mediterranea (strain DSM 17117 / CIP 110805 / LMG 28347 / Deep ecotype).